Consider the following 239-residue polypeptide: Purine nucleoside phosphorylase DeoD-type (239 aa).

Histidine 5 is an a purine D-ribonucleoside binding site. Residues glycine 21, arginine 25, arginine 44, and 88 to 91 contribute to the phosphate site; that span reads RVGS. A purine D-ribonucleoside-binding positions include 180-182 and 204-205; these read EME and SD. Aspartate 205 functions as the Proton donor in the catalytic mechanism.

It belongs to the PNP/UDP phosphorylase family. Homohexamer; trimer of homodimers.

The catalysed reaction is a purine D-ribonucleoside + phosphate = a purine nucleobase + alpha-D-ribose 1-phosphate. The enzyme catalyses a purine 2'-deoxy-D-ribonucleoside + phosphate = a purine nucleobase + 2-deoxy-alpha-D-ribose 1-phosphate. In terms of biological role, catalyzes the reversible phosphorolytic breakdown of the N-glycosidic bond in the beta-(deoxy)ribonucleoside molecules, with the formation of the corresponding free purine bases and pentose-1-phosphate. The polypeptide is Purine nucleoside phosphorylase DeoD-type (Erwinia tasmaniensis (strain DSM 17950 / CFBP 7177 / CIP 109463 / NCPPB 4357 / Et1/99)).